A 132-amino-acid chain; its full sequence is Small ribosomal subunit protein uS15 (132 aa).

This sequence belongs to the universal ribosomal protein uS15 family. Part of the 30S ribosomal subunit.

This is Small ribosomal subunit protein uS15 from Methanobrevibacter smithii (strain ATCC 35061 / DSM 861 / OCM 144 / PS).